Here is a 286-residue protein sequence, read N- to C-terminus: Alpha-ketoglutarate-dependent dioxygenase alkB homolog 3 (286 aa).

A disordered region spans residues Met-1–Glu-46. Over residues Pro-17 to Ala-38 the composition is skewed to polar residues. Residues Trp-115 and Tyr-141–Tyr-143 contribute to the substrate site. A Fe2OG dioxygenase domain is found at Thr-172–Tyr-278. Leu-177 is subject to (4R)-5-hydroxyleucine; alternate. A (4R)-5-oxoleucine; alternate modification is found at Leu-177. Asn-179–Tyr-181 lines the 2-oxoglutarate pocket. Fe cation contacts are provided by His-191 and Asp-193. Asp-194 lines the substrate pocket. His-257 is a binding site for Fe cation. 2-oxoglutarate contacts are provided by residues Arg-269–Arg-275 and Arg-275.

The protein belongs to the alkB family. As to quaternary structure, interacts with the ASCC complex composed of ASCC1, ASCC2 and ASCC3. Interacts directly with ASCC3, and is thereby recruited to the ASCC complex. Interacts with OTUD4; the interaction is direct. Interacts with USP7 and USP9X. Fe(2+) serves as cofactor. Post-translationally, ubiquitinated; undergoes 'Lys-48'-linked polyubiquitination. OTUD4 promotes USP7 and USP9X-dependent deubiquitination of 'Lys-48'-polyubiquitinated ALKBH3 promoting the repair of alkylated DNA lesions. As to expression, detected in testis, kidney, liver and heart.

It is found in the nucleus. The protein resides in the cytoplasm. The catalysed reaction is an N(1)-methyladenosine in mRNA + 2-oxoglutarate + O2 = an adenosine in mRNA + formaldehyde + succinate + CO2. It catalyses the reaction a methylated nucleobase within DNA + 2-oxoglutarate + O2 = a nucleobase within DNA + formaldehyde + succinate + CO2. It carries out the reaction an N(1)-methyl-2'-deoxyadenosine in single-stranded DNA + 2-oxoglutarate + O2 = a 2'-deoxyadenosine in single-stranded DNA + formaldehyde + succinate + CO2 + H(+). The enzyme catalyses an N(3)-methyl-2'-deoxycytidine in single-stranded DNA + 2-oxoglutarate + O2 = a 2'-deoxycytidine in single-stranded DNA + formaldehyde + succinate + CO2 + H(+). The catalysed reaction is a 3,N(4)-etheno-2'-deoxycytidine in single-stranded DNA + 2-oxoglutarate + O2 + H2O = a 2'-deoxycytidine in single-stranded DNA + glyoxal + succinate + CO2. Activated by ascorbate. Dioxygenase that mediates demethylation of DNA and RNA containing 1-methyladenosine (m1A). Repairs alkylated DNA containing 1-methyladenosine (m1A) and 3-methylcytosine (m3C) by oxidative demethylation. Has a strong preference for single-stranded DNA. Able to process alkylated m3C within double-stranded regions via its interaction with ASCC3, which promotes DNA unwinding to generate single-stranded substrate needed for ALKBH3. Can repair exocyclic 3,N4-ethenocytosine adducs in single-stranded DNA. Also acts on RNA. Demethylates N(1)-methyladenosine (m1A) RNA, an epigenetic internal modification of messenger RNAs (mRNAs) highly enriched within 5'-untranslated regions (UTRs) and in the vicinity of start codons. Requires molecular oxygen, alpha-ketoglutarate and iron. In Mus musculus (Mouse), this protein is Alpha-ketoglutarate-dependent dioxygenase alkB homolog 3.